The sequence spans 190 residues: Probable nicotinate-nucleotide adenylyltransferase (190 aa).

This sequence belongs to the NadD family.

The enzyme catalyses nicotinate beta-D-ribonucleotide + ATP + H(+) = deamido-NAD(+) + diphosphate. Its pathway is cofactor biosynthesis; NAD(+) biosynthesis; deamido-NAD(+) from nicotinate D-ribonucleotide: step 1/1. Its function is as follows. Catalyzes the reversible adenylation of nicotinate mononucleotide (NaMN) to nicotinic acid adenine dinucleotide (NaAD). This Myxococcus xanthus (strain DK1622) protein is Probable nicotinate-nucleotide adenylyltransferase.